The sequence spans 193 residues: Copper-binding lipoprotein NosL (193 aa).

The first 19 residues, 1–19, serve as a signal peptide directing secretion; that stretch reads MRTRLRFVLVAAALALLSA. Cysteine 20 carries the N-palmitoyl cysteine lipid modification. Residue cysteine 20 is the site of S-diacylglycerol cysteine attachment.

It belongs to the NosL family. In terms of assembly, monomer. Apo-NosL can form homodimers.

Its subcellular location is the cell membrane. In terms of biological role, may act as a metallochaperone involved in nitrous oxide reductase assembly. Specifically binds Cu(+). The protein is Copper-binding lipoprotein NosL of Achromobacter cycloclastes.